Reading from the N-terminus, the 334-residue chain is Tryptophan--tRNA ligase (334 aa).

ATP is bound by residues 12-14 (QPS) and 20-21 (GN). The 'HIGH' region signature appears at 13 to 21 (PSGIPTLGN). Position 136 (D136) interacts with L-tryptophan. Residues 148-150 (GKD), I187, and 196-200 (KMSKS) each bind ATP. The 'KMSKS' region motif lies at 196–200 (KMSKS).

This sequence belongs to the class-I aminoacyl-tRNA synthetase family. Homodimer.

It is found in the cytoplasm. The enzyme catalyses tRNA(Trp) + L-tryptophan + ATP = L-tryptophyl-tRNA(Trp) + AMP + diphosphate + H(+). Its function is as follows. Catalyzes the attachment of tryptophan to tRNA(Trp). This is Tryptophan--tRNA ligase from Wigglesworthia glossinidia brevipalpis.